Reading from the N-terminus, the 563-residue chain is GTPase Obg (563 aa).

One can recognise an Obg domain in the interval 2–168 (SDFVDRVTVH…RDVILELKSI (167 aa)). Residues 169–349 (ADVALVGFPS…LNFALSALVH (181 aa)) enclose the OBG-type G domain. GTP contacts are provided by residues 175 to 182 (GFPSAGKS), 200 to 204 (FTTLV), 221 to 224 (DVPG), 301 to 304 (NKID), and 330 to 332 (STA). Residues Ser-182 and Thr-202 each coordinate Mg(2+). In terms of domain architecture, OCT spans 383-469 (DEGGSALEFT…ARMVEFDWDP (87 aa)). A disordered region spans residues 529-563 (RKAGHWADPTVDDDRHDETSLFGHGESSEDGETEE).

It belongs to the TRAFAC class OBG-HflX-like GTPase superfamily. OBG GTPase family. Monomer. Mg(2+) serves as cofactor.

It localises to the cytoplasm. Functionally, an essential GTPase which binds GTP, GDP and possibly (p)ppGpp with moderate affinity, with high nucleotide exchange rates and a fairly low GTP hydrolysis rate. Plays a role in control of the cell cycle, stress response, ribosome biogenesis and in those bacteria that undergo differentiation, in morphogenesis control. This chain is GTPase Obg, found in Bifidobacterium longum (strain DJO10A).